The sequence spans 199 residues: Dephospho-CoA kinase (199 aa).

A DPCK domain is found at 3 to 199; the sequence is VIGLTGSIGM…AAAKMPRRRS (197 aa). ATP is bound at residue 11 to 16; that stretch reads GMGKST.

This sequence belongs to the CoaE family.

The protein localises to the cytoplasm. The catalysed reaction is 3'-dephospho-CoA + ATP = ADP + CoA + H(+). The protein operates within cofactor biosynthesis; coenzyme A biosynthesis; CoA from (R)-pantothenate: step 5/5. In terms of biological role, catalyzes the phosphorylation of the 3'-hydroxyl group of dephosphocoenzyme A to form coenzyme A. This chain is Dephospho-CoA kinase, found in Nitrobacter winogradskyi (strain ATCC 25391 / DSM 10237 / CIP 104748 / NCIMB 11846 / Nb-255).